The following is a 402-amino-acid chain: Proline-rich protein 25 (402 aa).

Disordered stretches follow at residues methionine 1–histidine 29, threonine 109–serine 255, and glutamate 337–arginine 371. The span at arginine 345–serine 355 shows a compositional bias: low complexity. Over residues proline 356–alanine 367 the composition is skewed to pro residues.

This chain is Proline-rich protein 25 (PRR25), found in Homo sapiens (Human).